We begin with the raw amino-acid sequence, 451 residues long: MAHTPATADVAPIPPTPEQQQFVDWLRAVAPYIHAFRDKTFVIGFGGELVKAGMLGALVNDIALLHAMGMHIVLVHGSRPQVEEQLALRHVQTQFVDGIRVTDNAALESAKEASGELRLDIEATFSQALPNTPMAGARISVVSGNFVTARPVGIVNGVDFQHTGLVRKIDAESIQHSLSNRKIVLLSPLGFSPTGQAFNLSMEDVATNTATALKADKLIFITEVPGIMDRVGKLQQELSMESAIERLREGRLSADTAYYLQHIVKAMRGGVRRAHLIPFALDGSILLELFLHDGVGTMVSHTDLEYLREATLDDVGGIVQLIEPLEADGTLVPRERRLLERDIANFSVIEHDGIIFGCAALYPYPKEGVGEMACLTVAPDTQGTGDGERLLKHVEARARAVGLKRLFVLTTRTEHWFLKRGFVHATVDDLPEDRRKLYNWQRRSMVLMKKL.

In terms of domain architecture, N-acetyltransferase spans 305–451; that stretch reads EYLREATLDD…RRSMVLMKKL (147 aa).

The protein belongs to the acetyltransferase family. ArgA subfamily.

The protein localises to the cytoplasm. It carries out the reaction L-glutamate + acetyl-CoA = N-acetyl-L-glutamate + CoA + H(+). Its pathway is amino-acid biosynthesis; L-arginine biosynthesis; N(2)-acetyl-L-ornithine from L-glutamate: step 1/4. The chain is Amino-acid acetyltransferase (argA) from Ralstonia nicotianae (strain ATCC BAA-1114 / GMI1000) (Ralstonia solanacearum).